The primary structure comprises 308 residues: Acetyl-coenzyme A carboxylase carboxyl transferase subunit beta 1 (308 aa).

In terms of domain architecture, CoA carboxyltransferase N-terminal spans 25-294 (VWTKCTSCEQ…PLVVSVNESP (270 aa)). Cys29, Cys32, Cys48, and Cys51 together coordinate Zn(2+). The C4-type zinc-finger motif lies at 29–51 (CTSCEQVLYHAELERNLEVCPKC). The segment at 288–308 (VSVNESPNEEPYSVPEVDEKG) is disordered.

Belongs to the AccD/PCCB family. As to quaternary structure, acetyl-CoA carboxylase is a heterohexamer composed of biotin carboxyl carrier protein (AccB), biotin carboxylase (AccC) and two subunits each of ACCase subunit alpha (AccA) and ACCase subunit beta (AccD). Zn(2+) is required as a cofactor.

The protein resides in the cytoplasm. It carries out the reaction N(6)-carboxybiotinyl-L-lysyl-[protein] + acetyl-CoA = N(6)-biotinyl-L-lysyl-[protein] + malonyl-CoA. Its pathway is lipid metabolism; malonyl-CoA biosynthesis; malonyl-CoA from acetyl-CoA: step 1/1. Functionally, component of the acetyl coenzyme A carboxylase (ACC) complex. Biotin carboxylase (BC) catalyzes the carboxylation of biotin on its carrier protein (BCCP) and then the CO(2) group is transferred by the transcarboxylase to acetyl-CoA to form malonyl-CoA. The sequence is that of Acetyl-coenzyme A carboxylase carboxyl transferase subunit beta 1 from Vibrio parahaemolyticus serotype O3:K6 (strain RIMD 2210633).